We begin with the raw amino-acid sequence, 1148 residues long: Protocadherin-19 (1148 aa).

An N-terminal signal peptide occupies residues methionine 1–alanine 21. 6 consecutive Cadherin domains span residues leucine 22–phenylalanine 129, proline 130–phenylalanine 238, serine 239–isoleucine 346, serine 350–phenylalanine 453, serine 454–isoleucine 563, and isoleucine 569–methionine 672. Residues leucine 22 to serine 678 lie on the Extracellular side of the membrane. Residues glutamate 31, glutamate 32, aspartate 88, and aspartate 90 each contribute to the Ca(2+) site. The cysteines at positions 93 and 99 are disulfide-linked. Ca(2+) is bound by residues aspartate 121, asparagine 123, aspartate 124, asparagine 125, glutamate 140, aspartate 155, aspartate 157, glutamate 199, aspartate 212, aspartate 230, serine 231, asparagine 232, aspartate 233, asparagine 234, and glutamate 249. N-linked (GlcNAc...) asparagine glycosylation is present at asparagine 261. Residues aspartate 264, aspartate 266, asparagine 270, aspartate 305, glutamate 307, aspartate 338, asparagine 340, aspartate 341, asparagine 342, glutamate 360, aspartate 375, aspartate 377, asparagine 381, aspartate 412, and glutamate 414 each contribute to the Ca(2+) site. Asparagine 420 is a glycosylation site (N-linked (GlcNAc...) asparagine). The Ca(2+) site is built by aspartate 427, aspartate 445, glutamate 446, asparagine 447, aspartate 448, asparagine 449, glutamate 464, aspartate 479, aspartate 481, asparagine 485, asparagine 522, glutamate 524, and aspartate 537. Residue asparagine 485 is glycosylated (N-linked (GlcNAc...) asparagine). An N-linked (GlcNAc...) asparagine glycan is attached at asparagine 546. Ca(2+)-binding residues include aspartate 555, valine 556, asparagine 557, aspartate 558, and asparagine 559. Asparagine 570 carries N-linked (GlcNAc...) asparagine glycosylation. The Ca(2+) site is built by aspartate 594, aspartate 596, asparagine 600, and aspartate 646. N-linked (GlcNAc...) asparagine glycosylation occurs at asparagine 676. Residues leucine 679 to valine 699 traverse the membrane as a helical segment. Topologically, residues alanine 700–leucine 1148 are cytoplasmic. Disordered regions lie at residues glycine 901–valine 921 and asparagine 1100–leucine 1148. Composition is skewed to basic and acidic residues over residues aspartate 906 to valine 921, serine 1109 to histidine 1123, and lysine 1130 to leucine 1148.

Homodimer; antiparallel. Moderately expressed in all regions of the brain examined, with lowest levels found in the cerebellum. Moderate expression is also found in ovary, and low expression in all other tissues tested. Also detected in primary skin fibroblast.

The protein localises to the cell membrane. Functionally, calcium-dependent cell-adhesion protein. The sequence is that of Protocadherin-19 (PCDH19) from Homo sapiens (Human).